Here is a 198-residue protein sequence, read N- to C-terminus: Recombination protein RecR (198 aa).

Residues 57-72 form a C4-type zinc finger; the sequence is CSVCGHITENDPCYIC. A Toprim domain is found at 80 to 175; the sequence is SVICVVEDDK…KVTRLAQGLS (96 aa).

Belongs to the RecR family.

Its function is as follows. May play a role in DNA repair. It seems to be involved in an RecBC-independent recombinational process of DNA repair. It may act with RecF and RecO. This is Recombination protein RecR from Staphylococcus haemolyticus (strain JCSC1435).